Here is a 1113-residue protein sequence, read N- to C-terminus: StAR-related lipid transfer protein 13 (1113 aa).

Methionine 1 is modified (N-acetylmethionine). The 68-residue stretch at 55–122 (QQEIEAKEAC…LNKCASMKLD (68 aa)) folds into the SAM domain. Disordered regions lie at residues 162 to 254 (LLPR…PTRA) and 307 to 346 (PNGD…VSTP). The segment covering 177 to 188 (MRNTTSSESVLT) has biased composition (polar residues). Low complexity-rich tracts occupy residues 197-213 (SIHS…SQPG) and 326-344 (SGKS…SGVS). At serine 411 the chain carries Phosphoserine. Over residues 536-549 (FEGNSVSEGRTTPS) the composition is skewed to polar residues. The tract at residues 536-580 (FEGNSVSEGRTTPSDVERDVTSLNESEPPGVRDRRDSGVGASLTR) is disordered. Residues 663–868 (VPLIVHVQRT…HMIMECDRLF (206 aa)) form the Rho-GAP domain. Positions 899–1107 (LEESGATFHT…RNSFQPLIAE (209 aa)) constitute an START domain.

In terms of assembly, homodimer. Interacts with TAX1BP1. In terms of tissue distribution, ubiquitously expressed. Underexpressed in hepatocellular carcinoma cells and some breast cancer cell lines.

Its subcellular location is the cytoplasm. The protein localises to the membrane. It localises to the mitochondrion membrane. The protein resides in the lipid droplet. Its function is as follows. GTPase-activating protein for RhoA, and perhaps for Cdc42. May be involved in regulation of cytoskeletal reorganization, cell proliferation and cell motility. Acts a tumor suppressor in hepatocellular carcinoma cells. This Homo sapiens (Human) protein is StAR-related lipid transfer protein 13 (STARD13).